Reading from the N-terminus, the 735-residue chain is Delta-1-pyrroline-5-carboxylate synthase 2 (735 aa).

A glutamate 5-kinase region spans residues 1–315; the sequence is MGRGGIGGAG…WGCSKEATAR (315 aa). 3 residues coordinate substrate: Ser-79, Asp-176, and Asn-195. ATP contacts are provided by residues 215 to 216, 221 to 226, and 255 to 261; these read SD, YSGPPS, and RGGMQAK. The tract at residues 316–735 is gamma-glutamyl phosphate reductase; the sequence is EMAVAARDCS…VYTHRELPLQ (420 aa).

In the N-terminal section; belongs to the glutamate 5-kinase family. The protein in the C-terminal section; belongs to the gamma-glutamyl phosphate reductase family.

It catalyses the reaction L-glutamate + ATP = L-glutamyl 5-phosphate + ADP. The catalysed reaction is L-glutamate 5-semialdehyde + phosphate + NADP(+) = L-glutamyl 5-phosphate + NADPH + H(+). It functions in the pathway amino-acid biosynthesis; L-proline biosynthesis; L-glutamate 5-semialdehyde from L-glutamate: step 1/2. It participates in amino-acid biosynthesis; L-proline biosynthesis; L-glutamate 5-semialdehyde from L-glutamate: step 2/2. With respect to regulation, feedback regulated by proline. Functionally, P5CS plays a key role in proline biosynthesis, leading to osmoregulation in plants. Involved in abiotic stress tolerance. This is Delta-1-pyrroline-5-carboxylate synthase 2 from Oryza sativa subsp. japonica (Rice).